Here is a 254-residue protein sequence, read N- to C-terminus: Arginine/ornithine transport ATP-binding protein AotP (254 aa).

Residues 4–249 (LEVQDLHKRY…PQSDRLKQFL (246 aa)) form the ABC transporter domain. Position 36 to 43 (36 to 43 (GSSGSGKS)) interacts with ATP.

This sequence belongs to the ABC transporter superfamily.

Its subcellular location is the cell inner membrane. In terms of biological role, part of the arginine-inducible binding-protein-dependent transport system for arginine and ornithine. Probably responsible for energy coupling to the transport system. The sequence is that of Arginine/ornithine transport ATP-binding protein AotP (aotP) from Pseudomonas aeruginosa (strain ATCC 15692 / DSM 22644 / CIP 104116 / JCM 14847 / LMG 12228 / 1C / PRS 101 / PAO1).